Reading from the N-terminus, the 350-residue chain is Protein pelota homolog (350 aa).

Belongs to the eukaryotic release factor 1 family. Pelota subfamily. As to quaternary structure, monomer. Requires a divalent metal cation as cofactor.

It is found in the cytoplasm. In terms of biological role, may function in recognizing stalled ribosomes, interact with stem-loop structures in stalled mRNA molecules, and effect endonucleolytic cleavage of the mRNA. May play a role in the release non-functional ribosomes and degradation of damaged mRNAs. Has endoribonuclease activity. In Methanosarcina acetivorans (strain ATCC 35395 / DSM 2834 / JCM 12185 / C2A), this protein is Protein pelota homolog.